The sequence spans 491 residues: Ketol-acid reductoisomerase (NADP(+)) (491 aa).

The KARI N-terminal Rossmann domain maps to 15 to 208; sequence AQLGKCRFMG…GGHRAGVLES (194 aa). NADP(+) contacts are provided by residues 45 to 48, R68, R76, S78, and 108 to 110; these read CGAQ and DKQ. The active site involves H132. G158 provides a ligand contact to NADP(+). KARI C-terminal knotted domains are found at residues 209–344 and 345–484; these read SFVA…TAPQ and FEGK…MTDM. Residues D217, E221, E389, and E393 each contribute to the Mg(2+) site. Residue S414 coordinates substrate.

Belongs to the ketol-acid reductoisomerase family. Mg(2+) is required as a cofactor.

It carries out the reaction (2R)-2,3-dihydroxy-3-methylbutanoate + NADP(+) = (2S)-2-acetolactate + NADPH + H(+). The catalysed reaction is (2R,3R)-2,3-dihydroxy-3-methylpentanoate + NADP(+) = (S)-2-ethyl-2-hydroxy-3-oxobutanoate + NADPH + H(+). It participates in amino-acid biosynthesis; L-isoleucine biosynthesis; L-isoleucine from 2-oxobutanoate: step 2/4. The protein operates within amino-acid biosynthesis; L-valine biosynthesis; L-valine from pyruvate: step 2/4. Its function is as follows. Involved in the biosynthesis of branched-chain amino acids (BCAA). Catalyzes an alkyl-migration followed by a ketol-acid reduction of (S)-2-acetolactate (S2AL) to yield (R)-2,3-dihydroxy-isovalerate. In the isomerase reaction, S2AL is rearranged via a Mg-dependent methyl migration to produce 3-hydroxy-3-methyl-2-ketobutyrate (HMKB). In the reductase reaction, this 2-ketoacid undergoes a metal-dependent reduction by NADPH to yield (R)-2,3-dihydroxy-isovalerate. The sequence is that of Ketol-acid reductoisomerase (NADP(+)) from Salmonella dublin (strain CT_02021853).